A 188-amino-acid chain; its full sequence is Elongation factor P (188 aa).

K34 is modified (N6-(3,6-diaminohexanoyl)-5-hydroxylysine).

It belongs to the elongation factor P family. Post-translationally, may be beta-lysylated on the epsilon-amino group of Lys-34 by the combined action of EpmA and EpmB, and then hydroxylated on the C5 position of the same residue by EpmC (if this protein is present). Lysylation is critical for the stimulatory effect of EF-P on peptide-bond formation. The lysylation moiety may extend toward the peptidyltransferase center and stabilize the terminal 3-CCA end of the tRNA. Hydroxylation of the C5 position on Lys-34 may allow additional potential stabilizing hydrogen-bond interactions with the P-tRNA.

Its subcellular location is the cytoplasm. Its pathway is protein biosynthesis; polypeptide chain elongation. Functionally, involved in peptide bond synthesis. Alleviates ribosome stalling that occurs when 3 or more consecutive Pro residues or the sequence PPG is present in a protein, possibly by augmenting the peptidyl transferase activity of the ribosome. Modification of Lys-34 is required for alleviation. This Pseudoalteromonas translucida (strain TAC 125) protein is Elongation factor P.